Reading from the N-terminus, the 686-residue chain is Methionine--tRNA ligase (686 aa).

A 'HIGH' region motif is present at residues 15 to 25 (PYANGSIHLGH). C146, C149, C159, and C162 together coordinate Zn(2+). A 'KMSKS' region motif is present at residues 332 to 336 (KMSKS). K335 lines the ATP pocket. The region spanning 585–686 (AFEAVDMRIA…EGAQPGMRVM (102 aa)) is the tRNA-binding domain.

Belongs to the class-I aminoacyl-tRNA synthetase family. MetG type 1 subfamily. Homodimer. Zn(2+) is required as a cofactor.

It localises to the cytoplasm. The catalysed reaction is tRNA(Met) + L-methionine + ATP = L-methionyl-tRNA(Met) + AMP + diphosphate. In terms of biological role, is required not only for elongation of protein synthesis but also for the initiation of all mRNA translation through initiator tRNA(fMet) aminoacylation. This Aliivibrio fischeri (strain ATCC 700601 / ES114) (Vibrio fischeri) protein is Methionine--tRNA ligase.